Reading from the N-terminus, the 88-residue chain is LYR motif-containing protein 2 (88 aa).

The transit peptide at 1-19 directs the protein to the mitochondrion; that stretch reads MAASRLPPATLTLKQFMRR.

Belongs to the complex I LYR family.

It localises to the mitochondrion. Involved in efficient integration of the N-module into mitochondrial respiratory chain complex I. This is LYR motif-containing protein 2 (Lyrm2) from Rattus norvegicus (Rat).